Here is a 230-residue protein sequence, read N- to C-terminus: Prepilin leader peptidase/N-methyltransferase (230 aa).

7 helical membrane passes run 1–21, 60–80, 84–104, 114–134, 140–160, 181–201, and 208–228; these read MIYFTMFLLGGILGIALWFYL, GHILRYFFSIGVGFIFLQIAF, IFTVWIGLTLIILWTISYLDW, CLWLLTLGLFGADNNFSLLTL, SAASFFIVFYVIYWLAKFYYG, LETLPHFLLLASVLGICFSLI, and FLPFAPFMNLSAVIIYFVKYY.

It belongs to the peptidase A24 family.

The protein resides in the cell inner membrane. The enzyme catalyses Typically cleaves a -Gly-|-Phe- bond to release an N-terminal, basic peptide of 5-8 residues from type IV prepilin, and then N-methylates the new N-terminal amino group, the methyl donor being S-adenosyl-L-methionine.. Its function is as follows. Plays a role in type II pseudopili formation by proteolytically removing the leader sequence from substrate proteins and subsequently monomethylating the alpha-amino group of the newly exposed N-terminal phenylalanine. Substrates include proteins required for biogenesis of the type II general secretory apparatus. The sequence is that of Prepilin leader peptidase/N-methyltransferase (hofD) from Haemophilus influenzae (strain ATCC 51907 / DSM 11121 / KW20 / Rd).